The following is a 31-amino-acid chain: LysM-domain containing protein (31 aa).

The LysM 1 repeat unit spans residues 1–28 (YSPSLTDLQSYNAMNGPALKAGDILAVP).

The chain is LysM-domain containing protein from Jatropha curcas (Barbados nut).